A 223-amino-acid chain; its full sequence is Ribose-5-phosphate isomerase A (223 aa).

Substrate is bound by residues 32-35 (TGST), 85-88 (DGAD), and 98-101 (KGGG). Residue Glu-107 is the Proton acceptor of the active site. A substrate-binding site is contributed by Lys-125.

This sequence belongs to the ribose 5-phosphate isomerase family. As to quaternary structure, homodimer.

The catalysed reaction is aldehydo-D-ribose 5-phosphate = D-ribulose 5-phosphate. It functions in the pathway carbohydrate degradation; pentose phosphate pathway; D-ribose 5-phosphate from D-ribulose 5-phosphate (non-oxidative stage): step 1/1. In terms of biological role, catalyzes the reversible conversion of ribose-5-phosphate to ribulose 5-phosphate. This is Ribose-5-phosphate isomerase A from Stutzerimonas stutzeri (strain A1501) (Pseudomonas stutzeri).